We begin with the raw amino-acid sequence, 432 residues long: 3-phosphoshikimate 1-carboxyvinyltransferase (432 aa).

Residues K23, S24, and R28 each coordinate 3-phosphoshikimate. K23 is a binding site for phosphoenolpyruvate. Phosphoenolpyruvate contacts are provided by G95 and R123. 3-phosphoshikimate-binding residues include S167, Q169, D316, and K343. Residue Q169 participates in phosphoenolpyruvate binding. The active-site Proton acceptor is D316. Phosphoenolpyruvate-binding residues include R347 and R391.

The protein belongs to the EPSP synthase family. In terms of assembly, monomer.

It is found in the cytoplasm. It catalyses the reaction 3-phosphoshikimate + phosphoenolpyruvate = 5-O-(1-carboxyvinyl)-3-phosphoshikimate + phosphate. The protein operates within metabolic intermediate biosynthesis; chorismate biosynthesis; chorismate from D-erythrose 4-phosphate and phosphoenolpyruvate: step 6/7. Catalyzes the transfer of the enolpyruvyl moiety of phosphoenolpyruvate (PEP) to the 5-hydroxyl of shikimate-3-phosphate (S3P) to produce enolpyruvyl shikimate-3-phosphate and inorganic phosphate. This Limosilactobacillus fermentum (strain NBRC 3956 / LMG 18251) (Lactobacillus fermentum) protein is 3-phosphoshikimate 1-carboxyvinyltransferase.